The primary structure comprises 433 residues: tRNA-queuosine alpha-mannosyltransferase (433 aa).

The interval 194-244 is disordered; sequence PAAKSHIQTSSPSSYPDVEPPEKMLNVAGTNQSHEPTSVTPHQETASPLCG. Residues 221 to 239 show a composition bias toward polar residues; the sequence is AGTNQSHEPTSVTPHQETA.

This sequence belongs to the glycosyltransferase group 1 family. Glycosyltransferase 4 subfamily.

It is found in the cytoplasm. It localises to the nucleus. It carries out the reaction queuosine(34) in tRNA(Asp) + GDP-alpha-D-mannose = O-4''-alpha-D-mannosylqueuosine(34) in tRNA(Asp) + GDP + H(+). In terms of biological role, glycosyltransferase that specifically catalyzes mannosylation of cytoplasmic tRNA(Asp) modified with queuosine at position 34 (queuosine(34)). Mannosylates the cyclopentene moiety of queuosine(34) in tRNA(Asp) to form mannosyl-queuosine(34). Mannosylation of queuosine(34) in tRNA(Asp) is required to slow-down elongation at cognate codons, GAC and GAU, thereby regulating protein translation. The sequence is that of tRNA-queuosine alpha-mannosyltransferase (gtdc1) from Danio rerio (Zebrafish).